The following is a 439-amino-acid chain: tRNA-2-methylthio-N(6)-dimethylallyladenosine synthase (439 aa).

The region spanning 1 to 117 (MKFYIRTFGC…IGNLVKRALN (117 aa)) is the MTTase N-terminal domain. 6 residues coordinate [4Fe-4S] cluster: Cys-10, Cys-46, Cys-80, Cys-153, Cys-157, and Cys-160. The Radical SAM core domain occupies 139 to 371 (PISKHHAWIT…MELQKRINLE (233 aa)). The region spanning 369 to 436 (NLEENEKYLE…PGPLYGEVVN (68 aa)) is the TRAM domain.

This sequence belongs to the methylthiotransferase family. MiaB subfamily. As to quaternary structure, monomer. [4Fe-4S] cluster is required as a cofactor.

It localises to the cytoplasm. It carries out the reaction N(6)-dimethylallyladenosine(37) in tRNA + (sulfur carrier)-SH + AH2 + 2 S-adenosyl-L-methionine = 2-methylsulfanyl-N(6)-dimethylallyladenosine(37) in tRNA + (sulfur carrier)-H + 5'-deoxyadenosine + L-methionine + A + S-adenosyl-L-homocysteine + 2 H(+). Functionally, catalyzes the methylthiolation of N6-(dimethylallyl)adenosine (i(6)A), leading to the formation of 2-methylthio-N6-(dimethylallyl)adenosine (ms(2)i(6)A) at position 37 in tRNAs that read codons beginning with uridine. The protein is tRNA-2-methylthio-N(6)-dimethylallyladenosine synthase of Petrotoga mobilis (strain DSM 10674 / SJ95).